Reading from the N-terminus, the 382-residue chain is Alkanesulfonate monooxygenase (382 aa).

This sequence belongs to the SsuD family. Homotetramer.

The enzyme catalyses an alkanesulfonate + FMNH2 + O2 = an aldehyde + FMN + sulfite + H2O + 2 H(+). Functionally, catalyzes the desulfonation of aliphatic sulfonates. The polypeptide is Alkanesulfonate monooxygenase (Yersinia pseudotuberculosis serotype IB (strain PB1/+)).